The sequence spans 426 residues: Tol-Pal system protein TolB (426 aa).

Positions 1 to 24 (MKLKSRFTSIIGVITLFFSQTVTA) are cleaved as a signal peptide.

It belongs to the TolB family. The Tol-Pal system is composed of five core proteins: the inner membrane proteins TolA, TolQ and TolR, the periplasmic protein TolB and the outer membrane protein Pal. They form a network linking the inner and outer membranes and the peptidoglycan layer.

It localises to the periplasm. Part of the Tol-Pal system, which plays a role in outer membrane invagination during cell division and is important for maintaining outer membrane integrity. The sequence is that of Tol-Pal system protein TolB from Actinobacillus pleuropneumoniae serotype 5b (strain L20).